The sequence spans 243 residues: MIKLTAQQIFDKLLDEEKILSANGQIRFFLGDVDIIVKQKDVVGNIIQEWLGGWLRKREIEFDVSTNTQMPPDFFLNKKDRSRELLEVKAFNRNASPGFDIADFKMYSDEIIHKPYMLDVDYLIFGYDMDDNGNVTIKDLWLKKVWQITRSMDGWAINLQVKKGVVHKIRPGVWYSINKKNMPMFECLEDFVSAIEETVYQNPATRHNASLWKRKFEEAYKKHYNRSISIPRWHEIAHKYKKK.

The enzyme catalyses Endonucleolytic cleavage of DNA to give specific double-stranded fragments with terminal 5'-phosphates.. In terms of biological role, a P subtype restriction enzyme that recognizes the double-stranded sequence 5'-GGNNCC-3' and cleaves after N-3. In Neisseria lactamica, this protein is Type II restriction enzyme NlaIV (nlaIVR).